Here is a 180-residue protein sequence, read N- to C-terminus: Large ribosomal subunit protein uL5 (180 aa).

It belongs to the universal ribosomal protein uL5 family. As to quaternary structure, part of the 50S ribosomal subunit; part of the 5S rRNA/L5/L18/L25 subcomplex. Contacts the 5S rRNA and the P site tRNA. Forms a bridge to the 30S subunit in the 70S ribosome.

Its function is as follows. This is one of the proteins that bind and probably mediate the attachment of the 5S RNA into the large ribosomal subunit, where it forms part of the central protuberance. In the 70S ribosome it contacts protein S13 of the 30S subunit (bridge B1b), connecting the 2 subunits; this bridge is implicated in subunit movement. Contacts the P site tRNA; the 5S rRNA and some of its associated proteins might help stabilize positioning of ribosome-bound tRNAs. This Polynucleobacter asymbioticus (strain DSM 18221 / CIP 109841 / QLW-P1DMWA-1) (Polynucleobacter necessarius subsp. asymbioticus) protein is Large ribosomal subunit protein uL5.